Here is a 370-residue protein sequence, read N- to C-terminus: Pyrimidine monooxygenase RutA (370 aa).

FMN is bound by residues 49–50 (IK), asparagine 115, glutamate 124, 140–141 (RY), and serine 190.

This sequence belongs to the NtaA/SnaA/DszA monooxygenase family. RutA subfamily.

The enzyme catalyses uracil + FMNH2 + NADH + O2 = (Z)-3-ureidoacrylate + FMN + NAD(+) + H2O + H(+). It carries out the reaction thymine + FMNH2 + NADH + O2 = (Z)-2-methylureidoacrylate + FMN + NAD(+) + H2O + H(+). Functionally, catalyzes the pyrimidine ring opening between N-3 and C-4 by an unusual flavin hydroperoxide-catalyzed mechanism, adding oxygen atoms in the process to yield ureidoacrylate peracid, that immediately reacts with FMN forming ureidoacrylate and FMN-N(5)-oxide. The FMN-N(5)-oxide reacts spontaneously with NADH to produce FMN. Requires the flavin reductase RutF to regenerate FMN in vivo. The chain is Pyrimidine monooxygenase RutA from Variovorax paradoxus (strain S110).